The primary structure comprises 250 residues: 23S rRNA (guanosine-2'-O-)-methyltransferase RlmB (250 aa).

Gly197, Ile217, and Met226 together coordinate S-adenosyl-L-methionine.

Belongs to the class IV-like SAM-binding methyltransferase superfamily. RNA methyltransferase TrmH family. RlmB subfamily.

The protein localises to the cytoplasm. The enzyme catalyses guanosine(2251) in 23S rRNA + S-adenosyl-L-methionine = 2'-O-methylguanosine(2251) in 23S rRNA + S-adenosyl-L-homocysteine + H(+). In terms of biological role, specifically methylates the ribose of guanosine 2251 in 23S rRNA. The polypeptide is 23S rRNA (guanosine-2'-O-)-methyltransferase RlmB (Neisseria meningitidis serogroup B (strain ATCC BAA-335 / MC58)).